The chain runs to 201 residues: High mobility group protein homolog 068R (201 aa).

DNA-binding regions (HMG box) lie at residues 70 to 138 (PKRN…ELEK) and 143 to 201 (TPSK…KAAK).

It belongs to the IIV-6 401R family.

The protein localises to the host nucleus. This chain is High mobility group protein homolog 068R, found in Invertebrate iridescent virus 3 (IIV-3).